The chain runs to 512 residues: Spastin homolog (512 aa).

At Met-1 to Gly-274 the chain is on the cytoplasmic side. The stretch at Ile-32–Arg-97 forms a coiled coil. Residues Lys-110 to Val-182 form a disordered region. Positions Ala-115 to Asn-233 are MTBD. A compositionally biased stretch (basic and acidic residues) spans Ala-137–Gly-163. An intramembrane region (helical) is located at residues Ile-275–Gly-294. Gly-279 to Thr-286 contributes to the ATP binding site. Residues Glu-295–Cys-512 lie on the Cytoplasmic side of the membrane.

This sequence belongs to the AAA ATPase family. Spastin subfamily. Homohexamer. The homohexamer is stabilized by ATP-binding. The homohexamer may adopt a ring conformation through which microtubules pass prior to being severed. Interacts with microtubules. Interacts (via N-terminus) with tubulin; the interaction is direct.

It localises to the membrane. The protein resides in the cytoplasm. It is found in the cytoskeleton. The protein localises to the perinuclear region. The enzyme catalyses n ATP + n H2O + a microtubule = n ADP + n phosphate + (n+1) alpha/beta tubulin heterodimers.. ATP-dependent microtubule severing protein that specifically recognizes and cuts microtubules. Probably by regulating microtubule remodeling, plays a role in new synapse formation in GABAergic DD (Dorsal D type) neurons. The protein is Spastin homolog of Caenorhabditis elegans.